The chain runs to 504 residues: Maturase K (504 aa).

The protein belongs to the intron maturase 2 family. MatK subfamily.

It localises to the plastid. It is found in the chloroplast. Functionally, usually encoded in the trnK tRNA gene intron. Probably assists in splicing its own and other chloroplast group II introns. This is Maturase K from Betula papyrifera (Paper birch).